We begin with the raw amino-acid sequence, 339 residues long: Methylthioribose-1-phosphate isomerase (339 aa).

Residues 52 to 54 (RGA), arginine 89, and glutamine 188 contribute to the substrate site. Catalysis depends on aspartate 229, which acts as the Proton donor. Position 239–240 (239–240 (NK)) interacts with substrate.

Belongs to the eIF-2B alpha/beta/delta subunits family. MtnA subfamily.

The enzyme catalyses 5-(methylsulfanyl)-alpha-D-ribose 1-phosphate = 5-(methylsulfanyl)-D-ribulose 1-phosphate. Its pathway is amino-acid biosynthesis; L-methionine biosynthesis via salvage pathway; L-methionine from S-methyl-5-thio-alpha-D-ribose 1-phosphate: step 1/6. Catalyzes the interconversion of methylthioribose-1-phosphate (MTR-1-P) into methylthioribulose-1-phosphate (MTRu-1-P). This chain is Methylthioribose-1-phosphate isomerase, found in Anaeromyxobacter sp. (strain K).